Consider the following 298-residue polypeptide: Ethylmalonyl-CoA decarboxylase (298 aa).

This sequence belongs to the enoyl-CoA hydratase/isomerase family.

The protein resides in the cytoplasm. It is found in the cytosol. It carries out the reaction (2S)-ethylmalonyl-CoA + H(+) = butanoyl-CoA + CO2. The catalysed reaction is (S)-methylmalonyl-CoA + H(+) = propanoyl-CoA + CO2. The enzyme catalyses (2R)-ethylmalonyl-CoA + H(+) = butanoyl-CoA + CO2. In terms of biological role, decarboxylates ethylmalonyl-CoA, a potentially toxic metabolite, to form butyryl-CoA, suggesting it might be involved in metabolite proofreading. Acts preferentially on (S)-ethylmalonyl-CoA but also has some activity on the (R)-isomer. Also has methylmalonyl-CoA decarboxylase activity at lower level. This is Ethylmalonyl-CoA decarboxylase (ECHDC1) from Gallus gallus (Chicken).